A 260-amino-acid chain; its full sequence is Thiazole synthase (260 aa).

K96 acts as the Schiff-base intermediate with DXP in catalysis. 1-deoxy-D-xylulose 5-phosphate contacts are provided by residues G157, 183–184 (AG), and 205–206 (AS).

The protein belongs to the ThiG family. As to quaternary structure, homotetramer. Forms heterodimers with either ThiH or ThiS.

The protein resides in the cytoplasm. The enzyme catalyses [ThiS sulfur-carrier protein]-C-terminal-Gly-aminoethanethioate + 2-iminoacetate + 1-deoxy-D-xylulose 5-phosphate = [ThiS sulfur-carrier protein]-C-terminal Gly-Gly + 2-[(2R,5Z)-2-carboxy-4-methylthiazol-5(2H)-ylidene]ethyl phosphate + 2 H2O + H(+). The protein operates within cofactor biosynthesis; thiamine diphosphate biosynthesis. Its function is as follows. Catalyzes the rearrangement of 1-deoxy-D-xylulose 5-phosphate (DXP) to produce the thiazole phosphate moiety of thiamine. Sulfur is provided by the thiocarboxylate moiety of the carrier protein ThiS. In vitro, sulfur can be provided by H(2)S. The polypeptide is Thiazole synthase (Corynebacterium glutamicum (strain R)).